Reading from the N-terminus, the 141-residue chain is uncharacterized protein (141 aa).

The protein belongs to the peptidase C56 family.

This is an uncharacterized protein from Streptomyces lividans.